Consider the following 529-residue polypeptide: AT hook-containing protein attf-4 (529 aa).

4 disordered regions span residues 1-39 (MLQP…MEDD), 131-158 (QVVH…KPIE), 173-200 (GGGG…FPPP), and 233-255 (VSAN…DHLE). Polar residues-rich tracts occupy residues 19–31 (SVST…SPSN) and 138–153 (QNGS…TSEN). Residues 179–189 (IHTERLSEPAR) are compositionally biased toward basic and acidic residues. Low complexity predominate over residues 233-248 (VSANTSTASPGPSSEG). A DNA-binding region (a.T hook) is located at residues 307–319 (GRGRGRPKLIGDE). Residues 436-476 (LEGGSPPASSSSTATTSTATKTVKQESKNGHQNEENLNVKQ) form a disordered region. Positions 443–455 (ASSSSTATTSTAT) are enriched in low complexity. Over residues 458-469 (VKQESKNGHQNE) the composition is skewed to basic and acidic residues.

This chain is AT hook-containing protein attf-4, found in Caenorhabditis elegans.